Consider the following 200-residue polypeptide: Recombination protein RecR (200 aa).

The C4-type zinc finger occupies 59-74 (CDICGNVCESSPCPVC). Positions 82-177 (SVICVVEEPK…KVTRLASGLP (96 aa)) constitute a Toprim domain.

It belongs to the RecR family.

May play a role in DNA repair. It seems to be involved in an RecBC-independent recombinational process of DNA repair. It may act with RecF and RecO. The sequence is that of Recombination protein RecR from Bifidobacterium longum (strain DJO10A).